Consider the following 477-residue polypeptide: Bifunctional protein HldE (477 aa).

Residues 1 to 318 (MKVNLPAFER…ENAVRGRADT (318 aa)) form a ribokinase region. An ATP-binding site is contributed by 195–198 (NLSE). D264 is a catalytic residue. The interval 344 to 477 (MTNGVFDILH…IKKIQTESEK (134 aa)) is cytidylyltransferase.

This sequence in the N-terminal section; belongs to the carbohydrate kinase PfkB family. It in the C-terminal section; belongs to the cytidylyltransferase family. Homodimer.

The catalysed reaction is D-glycero-beta-D-manno-heptose 7-phosphate + ATP = D-glycero-beta-D-manno-heptose 1,7-bisphosphate + ADP + H(+). The enzyme catalyses D-glycero-beta-D-manno-heptose 1-phosphate + ATP + H(+) = ADP-D-glycero-beta-D-manno-heptose + diphosphate. It functions in the pathway nucleotide-sugar biosynthesis; ADP-L-glycero-beta-D-manno-heptose biosynthesis; ADP-L-glycero-beta-D-manno-heptose from D-glycero-beta-D-manno-heptose 7-phosphate: step 1/4. The protein operates within nucleotide-sugar biosynthesis; ADP-L-glycero-beta-D-manno-heptose biosynthesis; ADP-L-glycero-beta-D-manno-heptose from D-glycero-beta-D-manno-heptose 7-phosphate: step 3/4. In terms of biological role, catalyzes the phosphorylation of D-glycero-D-manno-heptose 7-phosphate at the C-1 position to selectively form D-glycero-beta-D-manno-heptose-1,7-bisphosphate. Catalyzes the ADP transfer from ATP to D-glycero-beta-D-manno-heptose 1-phosphate, yielding ADP-D-glycero-beta-D-manno-heptose. This chain is Bifunctional protein HldE, found in Salmonella enteritidis PT4 (strain P125109).